We begin with the raw amino-acid sequence, 563 residues long: 5-aminolevulinate synthase, mitochondrial (563 aa).

A mitochondrion-targeting transit peptide spans 1–18 (MESLVRQSKKLCPYIGRT). Arg137, Ser251, and Lys270 together coordinate substrate. 3 residues coordinate pyridoxal 5'-phosphate: Ser303, His331, and Thr373. Lys376 is a catalytic residue. Lys376 carries the N6-(pyridoxal phosphate)lysine modification. 2 residues coordinate pyridoxal 5'-phosphate: Thr405 and Thr406. Thr491 is a binding site for substrate.

It belongs to the class-II pyridoxal-phosphate-dependent aminotransferase family. As to quaternary structure, homodimer. Pyridoxal 5'-phosphate serves as cofactor.

Its subcellular location is the mitochondrion matrix. It catalyses the reaction succinyl-CoA + glycine + H(+) = 5-aminolevulinate + CO2 + CoA. It functions in the pathway porphyrin-containing compound metabolism; protoporphyrin-IX biosynthesis; 5-aminolevulinate from glycine: step 1/1. Functionally, catalyzes the synthesis of 5-aminolevulinate (ALA) from succinyl-CoA and glycine, the first and rate-limiting step in heme biosynthesis. The polypeptide is 5-aminolevulinate synthase, mitochondrial (HEM1) (Yarrowia lipolytica (strain CLIB 122 / E 150) (Yeast)).